Here is a 151-residue protein sequence, read N- to C-terminus: Lipoprotein signal peptidase (151 aa).

3 consecutive transmembrane segments (helical) span residues 33–53, 58–78, and 87–107; these read VIPD…FGLL, WIFI…QFKI, and LTLG…LFIG. Active-site residues include D111 and D126. A helical transmembrane segment spans residues 120 to 140; it reads FVFNFADSAIVVGVGLLMILM.

This sequence belongs to the peptidase A8 family.

It localises to the cell membrane. It carries out the reaction Release of signal peptides from bacterial membrane prolipoproteins. Hydrolyzes -Xaa-Yaa-Zaa-|-(S,diacylglyceryl)Cys-, in which Xaa is hydrophobic (preferably Leu), and Yaa (Ala or Ser) and Zaa (Gly or Ala) have small, neutral side chains.. Its pathway is protein modification; lipoprotein biosynthesis (signal peptide cleavage). Functionally, this protein specifically catalyzes the removal of signal peptides from prolipoproteins. This Desulfitobacterium hafniense (strain DSM 10664 / DCB-2) protein is Lipoprotein signal peptidase.